Consider the following 628-residue polypeptide: Monoterpene synthase like 2, chloroplastic (628 aa).

The Mg(2+) site is built by D379, D383, and D531. The short motif at 379–383 (DDIYD) is the DDXXD motif element.

The protein belongs to the terpene synthase family. Tpsd subfamily. It depends on Mg(2+) as a cofactor. Mn(2+) is required as a cofactor.

It is found in the plastid. The protein resides in the chloroplast. It functions in the pathway terpene metabolism; oleoresin biosynthesis. It participates in secondary metabolite biosynthesis; terpenoid biosynthesis. In terms of biological role, monoterpene synthase (TPS) involved in the biosynthesis of monoterpene natural products included in conifer oleoresin secretions and volatile emissions; these compounds contribute to biotic and abiotic stress defense against herbivores and pathogens. This is Monoterpene synthase like 2, chloroplastic from Pinus banksiana (Jack pine).